We begin with the raw amino-acid sequence, 179 residues long: Endoribonuclease YbeY (179 aa).

Positions 148, 152, and 158 each coordinate Zn(2+).

The protein belongs to the endoribonuclease YbeY family. Zn(2+) is required as a cofactor.

It localises to the cytoplasm. Single strand-specific metallo-endoribonuclease involved in late-stage 70S ribosome quality control and in maturation of the 3' terminus of the 16S rRNA. The protein is Endoribonuclease YbeY of Prochlorococcus marinus (strain AS9601).